Here is a 485-residue protein sequence, read N- to C-terminus: Cyclic GMP-AMP synthase-like receptor (485 aa).

ATP is bound by residues Ser-70 and 82 to 84 (EYD). The Mg(2+) site is built by Glu-82, Asp-84, and Asp-204. Residues Asp-204 and 247–254 (RLSFYEQE) contribute to the GTP site. ATP-binding residues include Lys-271 and Lys-274. Positions 298 and 304 each coordinate Mn(2+).

This sequence belongs to the mab-21 family. Mg(2+) is required as a cofactor. Requires Mn(2+) as cofactor.

The enzyme catalyses GTP + ATP = 2',3'-cGAMP + 2 diphosphate. It carries out the reaction GTP + ATP = pppGp(2'-5')A + diphosphate. The catalysed reaction is pppGp(2'-5')A = 2',3'-cGAMP + diphosphate. Its function is as follows. Nucleotidyltransferase that catalyzes the formation of cyclic GMP-AMP (2',3'-cGAMP) from ATP and GTP and plays a key role in innate immunity. Directly binds some unknown ligand, activating the nucleotidyltransferase activity, leading to synthesis of 2',3'-cGAMP, a second messenger that binds to and activates Sting, thereby triggering the immune response via activation of the NF-kappa-B transcription factor. This Trichogramma pretiosum (Parasitoid wasp) protein is Cyclic GMP-AMP synthase-like receptor.